We begin with the raw amino-acid sequence, 223 residues long: DNA mismatch repair protein MutH (223 aa).

The protein belongs to the MutH family.

Its subcellular location is the cytoplasm. In terms of biological role, sequence-specific endonuclease that cleaves unmethylated GATC sequences. It is involved in DNA mismatch repair. In Shewanella baltica (strain OS223), this protein is DNA mismatch repair protein MutH.